The primary structure comprises 191 residues: Orotate phosphoribosyltransferase (191 aa).

A 5-phospho-alpha-D-ribose 1-diphosphate-binding site is contributed by Glu-114–Ser-122. Orotate-binding residues include Thr-118 and Arg-146.

It belongs to the purine/pyrimidine phosphoribosyltransferase family. PyrE subfamily. Homodimer. The cofactor is Mg(2+).

The enzyme catalyses orotidine 5'-phosphate + diphosphate = orotate + 5-phospho-alpha-D-ribose 1-diphosphate. It functions in the pathway pyrimidine metabolism; UMP biosynthesis via de novo pathway; UMP from orotate: step 1/2. Its function is as follows. Catalyzes the transfer of a ribosyl phosphate group from 5-phosphoribose 1-diphosphate to orotate, leading to the formation of orotidine monophosphate (OMP). This chain is Orotate phosphoribosyltransferase, found in Desulforamulus reducens (strain ATCC BAA-1160 / DSM 100696 / MI-1) (Desulfotomaculum reducens).